Reading from the N-terminus, the 407-residue chain is Imidazolonepropionase (407 aa).

Fe(3+) is bound by residues H74 and H76. H74 and H76 together coordinate Zn(2+). 4-imidazolone-5-propanoate contacts are provided by R83, Y146, and H179. Y146 is an N-formimidoyl-L-glutamate binding site. H244 provides a ligand contact to Fe(3+). H244 contacts Zn(2+). Q247 provides a ligand contact to 4-imidazolone-5-propanoate. Position 319 (D319) interacts with Fe(3+). D319 provides a ligand contact to Zn(2+). Positions 321 and 323 each coordinate N-formimidoyl-L-glutamate. T324 is a binding site for 4-imidazolone-5-propanoate.

Belongs to the metallo-dependent hydrolases superfamily. HutI family. Zn(2+) is required as a cofactor. It depends on Fe(3+) as a cofactor.

The protein localises to the cytoplasm. It carries out the reaction 4-imidazolone-5-propanoate + H2O = N-formimidoyl-L-glutamate. It functions in the pathway amino-acid degradation; L-histidine degradation into L-glutamate; N-formimidoyl-L-glutamate from L-histidine: step 3/3. In terms of biological role, catalyzes the hydrolytic cleavage of the carbon-nitrogen bond in imidazolone-5-propanoate to yield N-formimidoyl-L-glutamate. It is the third step in the universal histidine degradation pathway. This is Imidazolonepropionase from Salmonella typhimurium (strain LT2 / SGSC1412 / ATCC 700720).